Consider the following 253-residue polypeptide: Phosphate import ATP-binding protein PstB (253 aa).

The 249-residue stretch at 1–249 (MKLMDVRVSG…PRHELTKKFL (249 aa)) folds into the ABC transporter domain. 38–45 (GPSGSGKS) provides a ligand contact to ATP.

The protein belongs to the ABC transporter superfamily. Phosphate importer (TC 3.A.1.7) family. As to quaternary structure, the complex is composed of two ATP-binding proteins (PstB), two transmembrane proteins (PstC and PstA) and a solute-binding protein (PstS).

Its subcellular location is the cell membrane. It carries out the reaction phosphate(out) + ATP + H2O = ADP + 2 phosphate(in) + H(+). Its function is as follows. Part of the ABC transporter complex PstSACB involved in phosphate import. Responsible for energy coupling to the transport system. This Aeropyrum pernix (strain ATCC 700893 / DSM 11879 / JCM 9820 / NBRC 100138 / K1) protein is Phosphate import ATP-binding protein PstB.